Consider the following 279-residue polypeptide: NADPH-dependent 7-cyano-7-deazaguanine reductase (279 aa).

86-88 (IES) contacts substrate. Residue 88-89 (SK) participates in NADPH binding. Residue C187 is the Thioimide intermediate of the active site. Residue D194 is the Proton donor of the active site. 226–227 (HE) is a binding site for substrate. 255-256 (RG) is an NADPH binding site.

It belongs to the GTP cyclohydrolase I family. QueF type 2 subfamily. In terms of assembly, homodimer.

The protein resides in the cytoplasm. The enzyme catalyses 7-aminomethyl-7-carbaguanine + 2 NADP(+) = 7-cyano-7-deazaguanine + 2 NADPH + 3 H(+). Its pathway is tRNA modification; tRNA-queuosine biosynthesis. Its function is as follows. Catalyzes the NADPH-dependent reduction of 7-cyano-7-deazaguanine (preQ0) to 7-aminomethyl-7-deazaguanine (preQ1). This chain is NADPH-dependent 7-cyano-7-deazaguanine reductase, found in Haemophilus ducreyi (strain 35000HP / ATCC 700724).